The sequence spans 431 residues: Protein EARLY STARVATION 1, chloroplastic (431 aa).

A chloroplast-targeting transit peptide spans Met1–Gly19. Disordered stretches follow at residues Gly65–Ile126 and Gly403–Glu431. The span at Pro415–Glu431 shows a compositional bias: pro residues.

This sequence belongs to the ESV1 family.

It localises to the plastid. The protein localises to the chloroplast stroma. In terms of biological role, binds preferentially to highly ordered alpha-glucans, such as starch and crystalline maltodextrins. Involved in the organization of the starch granule matrix, thus influencing starch turnover by modulating the accessibility of starch polymers to modifying and degrading enzymes. Required for the control of starch degradation in leaves and starch distribution in nonphotosynthetic parts. Promotes gravitropic responses, negative in shoots but positive in roots, by facilitating starch granules (statoliths) formation in hypocotyls and roots columella. Facilitates tight packing of starch granules in grains. The polypeptide is Protein EARLY STARVATION 1, chloroplastic (Oryza sativa subsp. indica (Rice)).